The primary structure comprises 114 residues: Cytochrome c oxidase subunit 7A2-like, mitochondrial (114 aa).

Residues 1 to 55 (MYYKFSGFTQKLAGAWASEAYSPQGLKPVVSTEAPPIIFATPTKLTSDSTVYDYA) constitute a mitochondrion transit peptide. K69 is subject to N6-acetyllysine. A helical transmembrane segment spans residues 82–107 (PDQMLYRTTMALTVGGTIYCLIALYM).

It belongs to the cytochrome c oxidase VIIa family. As to quaternary structure, interacts with the mitochondrial respiratory complexes III (CIII) and IV (CIV), promoting their association.

It localises to the mitochondrion inner membrane. In terms of biological role, assembly factor that mediates the formation of some mitochondrial respiratory supercomplexes (respirasomes), thereby promoting oxidative phosphorylation and energy metabolism. Acts as a molecular adapter that associates with both mitochondrial respiratory complexes III (CIII) and IV (CIV), promoting their association. Mediates the formation of various mitochondrial respiratory supercomplexes, such as MCIII(2)IV(2), composed of two CIII and two CIV, and the CS-respirasome (MCI(1)III(2)IV(2)), composed of one CI, two CIII and two CIV. Not involved in the formation of the canonical respirasome (MCI(1)III(2)IV(1)), composed of one CI, two CIII and one CIV. The formation of different respirasomes is important for cell adaptation to oxygen conditions and prevent metabolic exhaustion: supercomplexes mediated by COX7A2L/SCAF1 are required to maintain oxidative phosphorylation upon low oxygen conditions and promote metabolic rewiring toward glycolysis. In Homo sapiens (Human), this protein is Cytochrome c oxidase subunit 7A2-like, mitochondrial.